Reading from the N-terminus, the 208-residue chain is ATP-dependent Clp protease proteolytic subunit (208 aa).

The active-site Nucleophile is serine 98. Residue histidine 123 is part of the active site.

Belongs to the peptidase S14 family. In terms of assembly, fourteen ClpP subunits assemble into 2 heptameric rings which stack back to back to give a disk-like structure with a central cavity, resembling the structure of eukaryotic proteasomes.

It is found in the cytoplasm. It catalyses the reaction Hydrolysis of proteins to small peptides in the presence of ATP and magnesium. alpha-casein is the usual test substrate. In the absence of ATP, only oligopeptides shorter than five residues are hydrolyzed (such as succinyl-Leu-Tyr-|-NHMec, and Leu-Tyr-Leu-|-Tyr-Trp, in which cleavage of the -Tyr-|-Leu- and -Tyr-|-Trp bonds also occurs).. Cleaves peptides in various proteins in a process that requires ATP hydrolysis. Has a chymotrypsin-like activity. Plays a major role in the degradation of misfolded proteins. The sequence is that of ATP-dependent Clp protease proteolytic subunit from Wolbachia sp. subsp. Drosophila simulans (strain wRi).